The chain runs to 155 residues: MFVKMIGWLVLFLFAHQTWAIEVAKDTNGGILNIAPEQLKRGKRLFNSHCSSCHVGGITKTNPNIGLDLESLSLATPPRNNLDALVDYMKNPTTYDGSESIAQIHPSIASSDIFPKMRDLSEDDLYAIAAHILTQPQIQAEKWGGGKIYYTKRSM.

An N-terminal signal peptide occupies residues 1 to 20; sequence MFVKMIGWLVLFLFAHQTWA. The heme c site is built by Cys-50, Cys-53, His-54, and His-105.

The protein belongs to the cytochrome c family. PsbV subfamily. In terms of assembly, PSII is composed of 1 copy each of membrane proteins PsbA, PsbB, PsbC, PsbD, PsbE, PsbF, PsbH, PsbI, PsbJ, PsbK, PsbL, PsbM, PsbT, PsbY, PsbZ, Psb30/Ycf12, at least 3 peripheral proteins of the oxygen-evolving complex and a large number of cofactors. It forms dimeric complexes. The extrinsic subunits in red algae are PsbO (OEC33), PsbQ', cytochrome c-550 and PsbU. Requires heme c as cofactor.

It is found in the plastid. The protein resides in the chloroplast thylakoid membrane. One of the extrinsic, lumenal subunits of photosystem II (PSII). PSII is a light-driven water plastoquinone oxidoreductase, using light energy to abstract electrons from H(2)O, generating a proton gradient subsequently used for ATP formation. The extrinsic proteins stabilize the structure of photosystem II oxygen-evolving complex (OEC), the ion environment of oxygen evolution and protect the OEC against heat-induced inactivation. Unlike the T.vulcanus ortholog, it does not bind by itself to PSII, but requires all extrinsic members of the OEC. The polypeptide is Photosystem II extrinsic protein V (Cyanidium caldarium (Red alga)).